We begin with the raw amino-acid sequence, 275 residues long: Probable siderophore transport system ATP-binding protein YusV (275 aa).

One can recognise an ABC transporter domain in the interval 6-242 (ISTETLSLGY…DLVQNVFSMN (237 aa)). 38-45 (GSNGCGKS) is an ATP binding site.

Belongs to the ABC transporter superfamily. In terms of assembly, the iron-hydroxamate siderophore complex is composed of one ATP-binding protein (YusV), two transmembrane proteins (YfiZ and YfhA) and a solute-binding protein (YfiY); the catechoplate siderophore complex is composed of one ATP-binding protein (YusV), two transmembrane proteins (FeuB and FeuC) and a solute-binding protein (FeuA).

Its subcellular location is the cell membrane. Its function is as follows. Provides the ATPase subunit for at least 2 ABC transporter complexes; YfiYZ/YfhA/YusV involved in import of the iron-hydroxamate siderophores schizokinen, arthrobactin and corprogen, and FeuABC/YusV involved in import of the catecholate siderophores bacillibactin and enterobactin. Probably responsible for energy coupling to the transport system. In Bacillus subtilis (strain 168), this protein is Probable siderophore transport system ATP-binding protein YusV (yusV).